The primary structure comprises 137 residues: Large ribosomal subunit protein uL16 (137 aa).

Positions 1-17 (MLSPKRTKFRKQQRGRM) are enriched in basic residues. The interval 1 to 24 (MLSPKRTKFRKQQRGRMRGNANSG) is disordered.

It belongs to the universal ribosomal protein uL16 family. In terms of assembly, part of the 50S ribosomal subunit.

In terms of biological role, binds 23S rRNA and is also seen to make contacts with the A and possibly P site tRNAs. The polypeptide is Large ribosomal subunit protein uL16 (Trichodesmium erythraeum (strain IMS101)).